Reading from the N-terminus, the 32-residue chain is Calcitonin (32 aa).

A disulfide bridge links cysteine 1 with cysteine 7. Position 32 is a proline amide (proline 32).

Belongs to the calcitonin family.

It localises to the secreted. Calcitonin is a peptide hormone that causes a rapid but short-lived drop in the level of calcium and phosphate in blood by promoting the incorporation of those ions in the bones. Calcitonin function is mediated by the calcitonin receptor/CALCR and the CALCR-RAMP2 (AMYR2) receptor complex. The sequence is that of Calcitonin (CALCA) from Bos taurus (Bovine).